A 247-amino-acid polypeptide reads, in one-letter code: LHFPL tetraspan subfamily member 4 protein (247 aa).

A run of 4 helical transmembrane segments spans residues 22 to 42, 97 to 117, 127 to 147, and 178 to 198; these read IGVL…VVFI, FFVL…SLFF, ICAW…MIFP, and ILAI…FVLG.

The protein belongs to the LHFP family. As to quaternary structure, interacts with GABA(A) receptor subunits. Identified in a complex of 720 kDa composed of LHFPL4, NLGN2, GABRA1, GABRB2, GABRG2 and GABRB3. Interacts with GABRB3. Interacts with GABRA2. Interacts with GABRG2. Interacts with GABRA1. Interacts with NLGN2; leading to mutual regulation of protein level and synaptic clustering.

The protein localises to the cell projection. It localises to the dendrite. It is found in the postsynaptic cell membrane. In terms of biological role, plays a role in the regulation of inhibitory synapse formation and function by being involved in maintening gamma-aminobutyric acid receptors (GABAARs) clustering and their associated scaffold proteins at inhibitory synaptic sites. Acts in concert with NLGN2 to recruit or stabilize GABAARs. This is LHFPL tetraspan subfamily member 4 protein from Homo sapiens (Human).